A 219-amino-acid polypeptide reads, in one-letter code: Lipid transferase CIDEB (219 aa).

Residue Thr-18 is modified to Phosphothreonine. The CIDE-N domain maps to 34 to 110 (PQRPFRVCDH…VLEQGQSWSP (77 aa)).

This sequence belongs to the CIDE family. Interacts with DFFA. Interacts with DFFB; inhibited by DFFB. Interacts with APOB. Interacts with PREB/SEC12; facilitating loading of SCAP-SREBP into COPII vesicles. As to expression, highly enriched in the liver.

The protein resides in the lipid droplet. Its subcellular location is the endoplasmic reticulum membrane. It localises to the golgi apparatus. It is found in the cytoplasmic vesicle. The protein localises to the COPI-coated vesicle. Lipid transferase specifically expressed in hepatocytes, which promotes unilocular lipid droplet formation by mediating lipid droplet fusion. Lipid droplet fusion promotes their enlargement, restricting lipolysis and favoring lipid storage. Localizes on the lipid droplet surface, at focal contact sites between lipid droplets, and mediates atypical lipid droplet fusion by promoting directional net neutral lipid transfer from the smaller to larger lipid droplets. The transfer direction may be driven by the internal pressure difference between the contacting lipid droplet pair. Promotes lipid exchange and lipid droplet fusion in both small and large lipid droplet-containing hepatocytes. In addition to its role in lipid droplet fusion, also involved in cytoplasmic vesicle biogenesis and transport. Required for very-low-density lipoprotein (VLDL) lipidation and maturation. Probably involved in the biogenesis of VLDL transport vesicles by forming a COPII vesicle coat and facilitating the formation of endoplasmic reticulum-derived large vesicles. Also involved in sterol-regulated export of the SCAP-SREBP complex, composed of SCAP, SREBF1/SREBP1 and SREBF2/SREBP2, by promoting loading of SCAP-SREBP into COPII vesicles. May also activate apoptosis. The polypeptide is Lipid transferase CIDEB (Mus musculus (Mouse)).